Here is a 50-residue protein sequence, read N- to C-terminus: Protein PsbN (50 aa).

The helical transmembrane segment at 14–34 (IAVTILAILLALTGFGLWSAF) threads the bilayer.

It belongs to the PsbN family.

The protein resides in the cellular thylakoid membrane. Functionally, may play a role in photosystem I and II biogenesis. This chain is Protein PsbN, found in Prochlorococcus marinus (strain MIT 9215).